The following is a 159-amino-acid chain: Sec-independent protein translocase protein TatB (159 aa).

The helical transmembrane segment at 1 to 21 (MIDIGLSKMALIGAVALIVIG) threads the bilayer.

The protein belongs to the TatB family. The Tat system comprises two distinct complexes: a TatABC complex, containing multiple copies of TatA, TatB and TatC subunits, and a separate TatA complex, containing only TatA subunits. Substrates initially bind to the TatABC complex, which probably triggers association of the separate TatA complex to form the active translocon.

The protein localises to the cell inner membrane. Part of the twin-arginine translocation (Tat) system that transports large folded proteins containing a characteristic twin-arginine motif in their signal peptide across membranes. Together with TatC, TatB is part of a receptor directly interacting with Tat signal peptides. TatB may form an oligomeric binding site that transiently accommodates folded Tat precursor proteins before their translocation. This chain is Sec-independent protein translocase protein TatB, found in Acidovorax sp. (strain JS42).